A 194-amino-acid polypeptide reads, in one-letter code: Crossover junction endodeoxyribonuclease RuvC (194 aa).

Active-site residues include aspartate 8, glutamate 72, and aspartate 144. Residues aspartate 8, glutamate 72, and aspartate 144 each coordinate Mg(2+).

Belongs to the RuvC family. As to quaternary structure, homodimer which binds Holliday junction (HJ) DNA. The HJ becomes 2-fold symmetrical on binding to RuvC with unstacked arms; it has a different conformation from HJ DNA in complex with RuvA. In the full resolvosome a probable DNA-RuvA(4)-RuvB(12)-RuvC(2) complex forms which resolves the HJ. Requires Mg(2+) as cofactor.

It is found in the cytoplasm. The catalysed reaction is Endonucleolytic cleavage at a junction such as a reciprocal single-stranded crossover between two homologous DNA duplexes (Holliday junction).. Functionally, the RuvA-RuvB-RuvC complex processes Holliday junction (HJ) DNA during genetic recombination and DNA repair. Endonuclease that resolves HJ intermediates. Cleaves cruciform DNA by making single-stranded nicks across the HJ at symmetrical positions within the homologous arms, yielding a 5'-phosphate and a 3'-hydroxyl group; requires a central core of homology in the junction. The consensus cleavage sequence is 5'-(A/T)TT(C/G)-3'. Cleavage occurs on the 3'-side of the TT dinucleotide at the point of strand exchange. HJ branch migration catalyzed by RuvA-RuvB allows RuvC to scan DNA until it finds its consensus sequence, where it cleaves and resolves the cruciform DNA. The chain is Crossover junction endodeoxyribonuclease RuvC from Psychrobacter arcticus (strain DSM 17307 / VKM B-2377 / 273-4).